The chain runs to 154 residues: Large ribosomal subunit protein uL15 (154 aa).

Positions 17–44 (KRVGRGIGSGTGKTGGRGVKGQRSRSGV) are disordered. Residues 21 to 35 (RGIGSGTGKTGGRGV) show a composition bias toward gly residues.

The protein belongs to the universal ribosomal protein uL15 family. In terms of assembly, part of the 50S ribosomal subunit.

Its function is as follows. Binds to the 23S rRNA. This is Large ribosomal subunit protein uL15 from Bartonella henselae (strain ATCC 49882 / DSM 28221 / CCUG 30454 / Houston 1) (Rochalimaea henselae).